Reading from the N-terminus, the 1227-residue chain is Tyrosine-protein kinase receptor ver-3 (1227 aa).

Residues Met-1–Ser-17 form the signal peptide. Residues Tyr-18 to Ser-764 are Extracellular-facing. Residues Pro-20–Cys-110 form the Ig-like C2-type 1 domain. A disulfide bond links Cys-52 and Cys-110. N-linked (GlcNAc...) asparagine glycosylation is found at Asn-119, Asn-211, Asn-245, Asn-255, Asn-381, Asn-425, and Asn-528. The Ig-like C2-type 2 domain occupies Val-200–Thr-325. A disulfide bond links Cys-204 and Cys-313. 2 Ig-like C2-type domains span residues Pro-565–Asp-666 and Pro-673–Asn-758. Disulfide bonds link Cys-592/Cys-650 and Cys-696/Cys-740. The N-linked (GlcNAc...) asparagine glycan is linked to Asn-697. A helical membrane pass occupies residues Leu-765 to Leu-785. The Cytoplasmic portion of the chain corresponds to Thr-786–Ala-1227. Residues Leu-847–Leu-1175 enclose the Protein kinase domain. ATP contacts are provided by residues Ile-853 to Val-861 and Lys-886. Residue Asp-1030 is the Proton acceptor of the active site. The disordered stretch occupies residues Asp-1194–Ala-1227. The segment covering Lys-1214 to Ala-1227 has biased composition (basic and acidic residues).

The protein belongs to the protein kinase superfamily. Tyr protein kinase family. In terms of tissue distribution, expressed in the ALA neuron.

It localises to the cell membrane. The enzyme catalyses L-tyrosyl-[protein] + ATP = O-phospho-L-tyrosyl-[protein] + ADP + H(+). Functionally, receptor tyrosine kinase which may be involved, downstream of pvf-1, in the positioning of ray 1, the most anterior ray sensillum in the male tail. The chain is Tyrosine-protein kinase receptor ver-3 from Caenorhabditis elegans.